We begin with the raw amino-acid sequence, 159 residues long: Large ribosomal subunit protein uL10 (159 aa).

It belongs to the universal ribosomal protein uL10 family. In terms of assembly, part of the ribosomal stalk of the 50S ribosomal subunit. The N-terminus interacts with L11 and the large rRNA to form the base of the stalk. The C-terminus forms an elongated spine to which L12 dimers bind in a sequential fashion forming a multimeric L10(L12)X complex.

Functionally, forms part of the ribosomal stalk, playing a central role in the interaction of the ribosome with GTP-bound translation factors. The sequence is that of Large ribosomal subunit protein uL10 from Campylobacter jejuni (strain RM1221).